A 395-amino-acid chain; its full sequence is Protein RIF2 (395 aa).

Interacts with RIF1 and RAP1 C-terminus.

The protein localises to the nucleus. It is found in the chromosome. It localises to the telomere. Involved in transcriptional silencing and telomere length regulation. Its role in telomere length regulation results from either a block in elongation or promoting degradation of the telomere ends. Loss of RIF1 function results in derepression of an HMR silencer, whose ARS consensus element has been deleted, and in the elongation of telomeres. RAP1 may target the binding of RIF1 to silencers and telomeres. The chain is Protein RIF2 (RIF2) from Saccharomyces cerevisiae (strain ATCC 204508 / S288c) (Baker's yeast).